A 158-amino-acid polypeptide reads, in one-letter code: NAD(P)H-quinone oxidoreductase subunit J, chloroplastic (158 aa).

Belongs to the complex I 30 kDa subunit family. As to quaternary structure, NDH is composed of at least 16 different subunits, 5 of which are encoded in the nucleus.

The protein resides in the plastid. It is found in the chloroplast thylakoid membrane. It carries out the reaction a plastoquinone + NADH + (n+1) H(+)(in) = a plastoquinol + NAD(+) + n H(+)(out). The enzyme catalyses a plastoquinone + NADPH + (n+1) H(+)(in) = a plastoquinol + NADP(+) + n H(+)(out). NDH shuttles electrons from NAD(P)H:plastoquinone, via FMN and iron-sulfur (Fe-S) centers, to quinones in the photosynthetic chain and possibly in a chloroplast respiratory chain. The immediate electron acceptor for the enzyme in this species is believed to be plastoquinone. Couples the redox reaction to proton translocation, and thus conserves the redox energy in a proton gradient. The chain is NAD(P)H-quinone oxidoreductase subunit J, chloroplastic from Nymphaea alba (White water-lily).